A 319-amino-acid chain; its full sequence is Ferrochelatase (319 aa).

Positions 193 and 274 each coordinate Fe cation.

Belongs to the ferrochelatase family.

The protein resides in the cytoplasm. It catalyses the reaction heme b + 2 H(+) = protoporphyrin IX + Fe(2+). It participates in porphyrin-containing compound metabolism; protoheme biosynthesis; protoheme from protoporphyrin-IX: step 1/1. Its function is as follows. Catalyzes the ferrous insertion into protoporphyrin IX. The chain is Ferrochelatase from Actinobacillus pleuropneumoniae serotype 3 (strain JL03).